A 260-amino-acid polypeptide reads, in one-letter code: Adenosylcobinamide-GDP ribazoletransferase (260 aa).

The next 6 helical transmembrane spans lie at 40–60 (AFPL…FMAY), 64–84 (LPPL…TGAL), 117–137 (FAAL…MTII), 192–212 (GIGL…LSLI), 214–234 (ALVL…AKIG), and 240–260 (TLGA…VMAL).

It belongs to the CobS family. Mg(2+) is required as a cofactor.

The protein localises to the cell inner membrane. The enzyme catalyses alpha-ribazole + adenosylcob(III)inamide-GDP = adenosylcob(III)alamin + GMP + H(+). The catalysed reaction is alpha-ribazole 5'-phosphate + adenosylcob(III)inamide-GDP = adenosylcob(III)alamin 5'-phosphate + GMP + H(+). Its pathway is cofactor biosynthesis; adenosylcobalamin biosynthesis; adenosylcobalamin from cob(II)yrinate a,c-diamide: step 7/7. Joins adenosylcobinamide-GDP and alpha-ribazole to generate adenosylcobalamin (Ado-cobalamin). Also synthesizes adenosylcobalamin 5'-phosphate from adenosylcobinamide-GDP and alpha-ribazole 5'-phosphate. This Brucella anthropi (strain ATCC 49188 / DSM 6882 / CCUG 24695 / JCM 21032 / LMG 3331 / NBRC 15819 / NCTC 12168 / Alc 37) (Ochrobactrum anthropi) protein is Adenosylcobinamide-GDP ribazoletransferase.